The sequence spans 363 residues: Protein RecA (363 aa).

Position 77–84 (77–84) interacts with ATP; that stretch reads GPESSGKT.

This sequence belongs to the RecA family.

It localises to the cytoplasm. Its function is as follows. Can catalyze the hydrolysis of ATP in the presence of single-stranded DNA, the ATP-dependent uptake of single-stranded DNA by duplex DNA, and the ATP-dependent hybridization of homologous single-stranded DNAs. It interacts with LexA causing its activation and leading to its autocatalytic cleavage. The sequence is that of Protein RecA from Agrobacterium fabrum (strain C58 / ATCC 33970) (Agrobacterium tumefaciens (strain C58)).